We begin with the raw amino-acid sequence, 505 residues long: 6-phosphofructo-2-kinase/fructose-2,6-bisphosphatase 2 (505 aa).

Residues 1 to 20 (MSGASSSEQNNNSYETKTPN) form a disordered region. Serine 2 bears the N-acetylserine mark. Positions 2 to 248 (SGASSSEQNN…VYYLMNIHVQ (247 aa)) are 6-phosphofructo-2-kinase. The residue at position 29 (serine 29) is a Phosphoserine; by PKA. 45–53 (GLPARGKTY) contacts ATP. Residues arginine 78 and arginine 102 each contribute to the beta-D-fructose 6-phosphate site. Aspartate 128 is a catalytic residue. Beta-D-fructose 6-phosphate-binding residues include threonine 130 and arginine 136. The active site involves cysteine 158. Residue 167 to 172 (NILEVK) coordinates ATP. Beta-D-fructose 6-phosphate is bound by residues lysine 172, arginine 193, and tyrosine 197. A fructose-2,6-bisphosphatase region spans residues 249-505 (PRTIYLCRHG…RAQDMQEGAD (257 aa)). Arginine 256 serves as a coordination point for beta-D-fructose 2,6-bisphosphate. Histidine 257 serves as the catalytic Tele-phosphohistidine intermediate. Residues asparagine 263 and glycine 269 each coordinate beta-D-fructose 2,6-bisphosphate. The Proton donor/acceptor role is filled by glutamate 326. Beta-D-fructose 2,6-bisphosphate is bound by residues tyrosine 337, arginine 351, lysine 355, tyrosine 366, glutamine 392, and arginine 396. 348 to 351 (FALR) provides a ligand contact to ATP. Residues 392–396 (QAVMR) and tyrosine 428 contribute to the ATP site. The segment at 445–505 (HRDKPTNNFP…RAQDMQEGAD (61 aa)) is disordered. Over residues 450 to 476 (TNNFPKNQTPVRMRRNSFTPLSSSNTI) the composition is skewed to polar residues. Serine 466 bears the Phosphoserine; by AMPK mark. Phosphothreonine occurs at positions 468 and 475. The residue at position 483 (serine 483) is a Phosphoserine; by BRAF. Phosphoserine occurs at positions 486 and 493.

The protein in the C-terminal section; belongs to the phosphoglycerate mutase family. In terms of assembly, homodimer. Forms a heterodimer with PFKFB3. Phosphorylation by AMPK stimulates activity. Heart.

It carries out the reaction beta-D-fructose 2,6-bisphosphate + H2O = beta-D-fructose 6-phosphate + phosphate. The enzyme catalyses beta-D-fructose 6-phosphate + ATP = beta-D-fructose 2,6-bisphosphate + ADP + H(+). Phosphorylation results in the activation of the kinase activity. Synthesis and degradation of fructose 2,6-bisphosphate. In Homo sapiens (Human), this protein is 6-phosphofructo-2-kinase/fructose-2,6-bisphosphatase 2.